The primary structure comprises 875 residues: F-box only protein 41 (875 aa).

Disordered stretches follow at residues 85–110 (ESTSFQGKEQAAGPSPAAPHLLHHHH), 165–194 (SSACSTPPPGPGPGPCPGPASASPASPSPA), and 347–542 (SSSC…PSRS). A compositionally biased stretch (pro residues) spans 170-182 (TPPPGPGPGPCPG). Positions 183–194 (PASASPASPSPA) are enriched in low complexity. Residues 209–351 (ALEKLEVDRR…QLQVISSSCG (143 aa)) adopt a coiled-coil conformation. Positions 347–356 (SSSCGSTPSA) are enriched in polar residues. Residues 359–368 (GRGGGGGGAG) show a composition bias toward gly residues. Position 360 is an omega-N-methylarginine (arginine 360). The span at 395–416 (HGSSPSTGASSRVPAASQSSGC) shows a compositional bias: polar residues. Residue serine 478 is modified to Phosphoserine. Threonine 479 carries the phosphothreonine modification. One can recognise an F-box domain in the interval 496–540 (SEAEGPLDAPRPGPAMAGPLSSCRLSARPEGGSGRGRRAERVSPS). Serine 762 carries the phosphoserine modification.

In terms of assembly, directly interacts with SKP1 and CUL1.

Functionally, substrate-recognition component of the SCF (SKP1-CUL1-F-box protein)-type E3 ubiquitin ligase complex. This is F-box only protein 41 (FBXO41) from Homo sapiens (Human).